Reading from the N-terminus, the 299-residue chain is tRNA dimethylallyltransferase (299 aa).

Residue 13–20 coordinates ATP; the sequence is GPTASGKT. 15–20 is a binding site for substrate; that stretch reads TASGKT. Residues 38–41 form an interaction with substrate tRNA region; sequence DSRQ.

This sequence belongs to the IPP transferase family. In terms of assembly, monomer. The cofactor is Mg(2+).

The enzyme catalyses adenosine(37) in tRNA + dimethylallyl diphosphate = N(6)-dimethylallyladenosine(37) in tRNA + diphosphate. Its function is as follows. Catalyzes the transfer of a dimethylallyl group onto the adenine at position 37 in tRNAs that read codons beginning with uridine, leading to the formation of N6-(dimethylallyl)adenosine (i(6)A). This is tRNA dimethylallyltransferase from Prochlorococcus marinus (strain MIT 9301).